Here is a 343-residue protein sequence, read N- to C-terminus: Phenylalanine--tRNA ligase alpha subunit (343 aa).

Residue Glu-256 participates in Mg(2+) binding.

This sequence belongs to the class-II aminoacyl-tRNA synthetase family. Phe-tRNA synthetase alpha subunit type 1 subfamily. As to quaternary structure, tetramer of two alpha and two beta subunits. Requires Mg(2+) as cofactor.

Its subcellular location is the cytoplasm. The catalysed reaction is tRNA(Phe) + L-phenylalanine + ATP = L-phenylalanyl-tRNA(Phe) + AMP + diphosphate + H(+). The protein is Phenylalanine--tRNA ligase alpha subunit of Aster yellows witches'-broom phytoplasma (strain AYWB).